Consider the following 398-residue polypeptide: Growth-regulating factor 3 (398 aa).

The span at 1–17 (MDLQLKQWRSQQQQQHQ) shows a compositional bias: low complexity. The disordered stretch occupies residues 1–32 (MDLQLKQWRSQQQQQHQTESEEQPSAAKIPKH). One can recognise a QLQ domain in the interval 76 to 111 (FFSWAQWQELELQALIYRYMLAGAAVPQELLLPIKK). A WRC domain is found at 144–188 (DPEPGRCRRTDGKKWRCSRDVFAGHKYCERHMHRGRNRSRKPVET). Short sequence motifs (bipartite nuclear localization signal) lie at residues 149–159 (RCRRTDGKKWR) and 177–184 (RGRNRSRK). Polar residues-rich tracts occupy residues 299–350 (SLQE…RDQQ) and 383–398 (PTSVLHQLGVSTQAFH). A disordered region spans residues 299 to 398 (SLQEADNSSS…QLGVSTQAFH (100 aa)).

This sequence belongs to the GRF family. Strongly expressed in actively growing and developing tissues, such as roots, upper stems, and shoot tips containing the shoot apical meristem (SAM) and flower buds. Also expressed in mature flowers, but weakly expressed in mature stems and leaves.

The protein localises to the nucleus. Its function is as follows. Transcription activator that plays a role in the regulation of cell expansion in leaf and cotyledons tissues. Component of a network formed by miR396, the GRFs and their interacting factors (GIFs) acting in the regulation of meristem function, at least partially through the control of cell proliferation. microRNA396-GRF1/GRF3 regulatory module acts as a developmental regulator in the reprogramming of root cells during cyst nematode infection, leading to the formation of the syncytium. The protein is Growth-regulating factor 3 (GRF3) of Arabidopsis thaliana (Mouse-ear cress).